Reading from the N-terminus, the 216-residue chain is Large ribosomal subunit protein uL3 (216 aa).

Gln-157 is modified (N5-methylglutamine).

It belongs to the universal ribosomal protein uL3 family. As to quaternary structure, part of the 50S ribosomal subunit. Forms a cluster with proteins L14 and L19. Post-translationally, methylated by PrmB.

In terms of biological role, one of the primary rRNA binding proteins, it binds directly near the 3'-end of the 23S rRNA, where it nucleates assembly of the 50S subunit. This Stenotrophomonas maltophilia (strain R551-3) protein is Large ribosomal subunit protein uL3.